A 502-amino-acid polypeptide reads, in one-letter code: Histidine--tRNA ligase (502 aa).

It belongs to the class-II aminoacyl-tRNA synthetase family. In terms of assembly, homodimer.

Its subcellular location is the cytoplasm. The enzyme catalyses tRNA(His) + L-histidine + ATP = L-histidyl-tRNA(His) + AMP + diphosphate + H(+). This chain is Histidine--tRNA ligase, found in Brucella abortus (strain S19).